Here is a 159-residue protein sequence, read N- to C-terminus: Phosphodiesterase delta-like protein (159 aa).

This sequence belongs to the PDE6D/unc-119 family.

This chain is Phosphodiesterase delta-like protein (pdl-1), found in Caenorhabditis elegans.